The following is a 482-amino-acid chain: GTPase Obg (482 aa).

The Obg domain occupies 2–159 (PRFIDRVVVH…RELTLELKTV (158 aa)). Positions 160–341 (ADVGLVGFPS…LIFALWDMVA (182 aa)) constitute an OBG-type G domain. GTP-binding positions include 166–173 (GFPSAGKS), 191–195 (FTTLA), 212–215 (DVPG), 292–295 (NKID), and 322–324 (STV). Positions 173 and 193 each coordinate Mg(2+). An OCT domain is found at 359-437 (PIPVDETAFS…IGDMTFDWEP (79 aa)). The segment at 450–482 (RGTDVRLEQTDRVGADERKAARKARRQSDDGEE) is disordered. Residues 452–468 (TDVRLEQTDRVGADERK) show a composition bias toward basic and acidic residues.

Belongs to the TRAFAC class OBG-HflX-like GTPase superfamily. OBG GTPase family. In terms of assembly, monomer. Requires Mg(2+) as cofactor.

It localises to the cytoplasm. In terms of biological role, an essential GTPase which binds GTP, GDP and possibly (p)ppGpp with moderate affinity, with high nucleotide exchange rates and a fairly low GTP hydrolysis rate. Plays a role in control of the cell cycle, stress response, ribosome biogenesis and in those bacteria that undergo differentiation, in morphogenesis control. The protein is GTPase Obg of Mycolicibacterium gilvum (strain PYR-GCK) (Mycobacterium gilvum (strain PYR-GCK)).